We begin with the raw amino-acid sequence, 315 residues long: Olfactory receptor 3A3 (315 aa).

Topologically, residues 1–28 (MESEAGTNRTAVAEFMLLGLVQTEEMQS) are extracellular. A glycan (N-linked (GlcNAc...) asparagine) is linked at asparagine 8. The chain crosses the membrane as a helical span at residues 29–52 (VIFVLLLFAYLVTTGGNLSILAAI). At 53-60 (LVEPKLHT) the chain is on the cytoplasmic side. Residues 61 to 82 (PMYFFLGNLSVLDVGCITVTVP) traverse the membrane as a helical segment. The Extracellular segment spans residues 83-103 (AMLGRLLSHKSTISYDACLSQ). Cysteine 100 and cysteine 192 are joined by a disulfide. Residues 104–123 (LFFFHLLAGMDCFLLTAMAY) traverse the membrane as a helical segment. At 124–143 (DRFLAICRPLTYSTHMNQRV) the chain is on the cytoplasmic side. The helical transmembrane segment at 144-161 (QRMLVAVSWTCAFTNALT) threads the bilayer. Residues 162 to 199 (HTIALTTLNFCGPSVINHFYCDLPQLFQLSCSSTQLNE) are Extracellular-facing. A helical membrane pass occupies residues 200–222 (LLLFVAAAVMAVAPLVFISVSYA). Residues 223–239 (HVVAAVLQIHSAEGRKK) lie on the Cytoplasmic side of the membrane. Residues 240–262 (AFSTCGSHLTVVGIFYGTGVFSY) form a helical membrane-spanning segment. At 263–275 (MRLGSVESSDKDK) the chain is on the extracellular side. The helical transmembrane segment at 276-295 (GVGVFMTVINPMLNPLIYSL) threads the bilayer. The Cytoplasmic segment spans residues 296 to 315 (RNTDVQGALCQLLVVKRSLT).

It belongs to the G-protein coupled receptor 1 family.

It localises to the cell membrane. In terms of biological role, odorant receptor. This is Olfactory receptor 3A3 (OR3A3) from Pan troglodytes (Chimpanzee).